Here is a 221-residue protein sequence, read N- to C-terminus: Lysine N-acyltransferase MbtK (221 aa).

The interval 1 to 34 (MSDAPAESAPAQIDPAQTDPAEQPVQILPRERSD) is disordered. Residue His141 coordinates substrate. The Proton acceptor role is filled by Asp179.

The protein belongs to the lysine N-acyltransferase MbtK family. In terms of assembly, monomer.

It functions in the pathway siderophore biosynthesis; mycobactin biosynthesis. Its function is as follows. Acyltransferase required for the direct transfer of medium- to long-chain fatty acyl moieties from a carrier protein (MbtL) on to the epsilon-amino group of lysine residue in the mycobactin core. The chain is Lysine N-acyltransferase MbtK (mbtK) from Mycolicibacterium paratuberculosis (strain ATCC BAA-968 / K-10) (Mycobacterium paratuberculosis).